The chain runs to 258 residues: 3-deoxy-manno-octulosonate cytidylyltransferase (258 aa).

Belongs to the KdsB family.

The protein resides in the cytoplasm. The catalysed reaction is 3-deoxy-alpha-D-manno-oct-2-ulosonate + CTP = CMP-3-deoxy-beta-D-manno-octulosonate + diphosphate. It participates in nucleotide-sugar biosynthesis; CMP-3-deoxy-D-manno-octulosonate biosynthesis; CMP-3-deoxy-D-manno-octulosonate from 3-deoxy-D-manno-octulosonate and CTP: step 1/1. Its pathway is bacterial outer membrane biogenesis; lipopolysaccharide biosynthesis. Its function is as follows. Activates KDO (a required 8-carbon sugar) for incorporation into bacterial lipopolysaccharide in Gram-negative bacteria. This chain is 3-deoxy-manno-octulosonate cytidylyltransferase, found in Pasteurella multocida (strain Pm70).